A 256-amino-acid chain; its full sequence is Inositol-1-monophosphatase (256 aa).

4 residues coordinate Mg(2+): Glu-60, Asp-77, Leu-79, and Asp-80. Substrate is bound at residue Glu-60. Substrate-binding positions include 79 to 82 (LDGT), Arg-178, and Asp-207. Position 207 (Asp-207) interacts with Mg(2+).

The protein belongs to the inositol monophosphatase superfamily. Mg(2+) serves as cofactor.

The enzyme catalyses a myo-inositol phosphate + H2O = myo-inositol + phosphate. The protein is Inositol-1-monophosphatase (suhB) of Caulobacter vibrioides (strain ATCC 19089 / CIP 103742 / CB 15) (Caulobacter crescentus).